We begin with the raw amino-acid sequence, 338 residues long: Glycerol-3-phosphate dehydrogenase [NAD(P)+] (338 aa).

Serine 13, tryptophan 14, and lysine 108 together coordinate NADPH. Lysine 108, glycine 139, and serine 141 together coordinate sn-glycerol 3-phosphate. An NADPH-binding site is contributed by alanine 143. Residues lysine 194, aspartate 247, serine 257, arginine 258, and asparagine 259 each coordinate sn-glycerol 3-phosphate. The active-site Proton acceptor is the lysine 194. Arginine 258 serves as a coordination point for NADPH. NADPH-binding residues include valine 282 and glutamate 284.

It belongs to the NAD-dependent glycerol-3-phosphate dehydrogenase family.

It is found in the cytoplasm. It carries out the reaction sn-glycerol 3-phosphate + NAD(+) = dihydroxyacetone phosphate + NADH + H(+). It catalyses the reaction sn-glycerol 3-phosphate + NADP(+) = dihydroxyacetone phosphate + NADPH + H(+). It functions in the pathway membrane lipid metabolism; glycerophospholipid metabolism. Functionally, catalyzes the reduction of the glycolytic intermediate dihydroxyacetone phosphate (DHAP) to sn-glycerol 3-phosphate (G3P), the key precursor for phospholipid synthesis. The chain is Glycerol-3-phosphate dehydrogenase [NAD(P)+] from Streptococcus pneumoniae (strain Taiwan19F-14).